A 596-amino-acid polypeptide reads, in one-letter code: Protein kinase C iota type (596 aa).

Residues 1–12 show a composition bias toward polar residues; the sequence is MPTQRDSSTMSH. A disordered region spans residues 1–21; it reads MPTQRDSSTMSHTVACGGGGD. Pro-2 is subject to N-acetylproline. The tract at residues 2–28 is required for interaction with RAB2; the sequence is PTQRDSSTMSHTVACGGGGDHSHQVRV. Residues 2-253 are regulatory domain; sequence PTQRDSSTMS…KASSSLGLQD (252 aa). At Thr-3 the chain carries Phosphothreonine. Ser-7 and Ser-8 each carry phosphoserine. A Phosphothreonine modification is found at Thr-9. The region spanning 25–108 is the PB1 domain; sequence QVRVKAYYRG…SELLIHVFPC (84 aa). Residues 72–91 are interaction with PARD6A; the sequence is DEEGDPCTVSSQLELEEAFR. A Pseudosubstrate motif is present at residues 125 to 134; the sequence is YRRGARRWRK. The Phorbol-ester/DAG-type zinc finger occupies 140–190; that stretch reads GHTFQAKRFNRRAHCAICTDRIWGLGRQGYKCINCKLLVHKKCHKLVTIEC. Positions 254–522 constitute a Protein kinase domain; it reads FDLLRVIGRG…FADIQGHPFF (269 aa). Residue 260–268 coordinates ATP; it reads IGRGSYAKV. Phosphotyrosine; by SRC is present on residues Tyr-265 and Tyr-280. ATP is bound at residue Lys-283. Tyr-334 carries the post-translational modification Phosphotyrosine; by SRC. Catalysis depends on Asp-378, which acts as the Proton acceptor. Thr-412 bears the Phosphothreonine; by PDPK1 mark. Positions 523–594 constitute an AGC-kinase C-terminal domain; it reads RNVDWDMMEQ…INPLLMSAEE (72 aa). Thr-564 is modified (phosphothreonine).

Belongs to the protein kinase superfamily. AGC Ser/Thr protein kinase family. PKC subfamily. Forms a complex with SQSTM1 and MP2K5. Interacts directly with SQSTM1. Interacts with IKBKB. Interacts with PARD6A, PARD6B and PARD6G. Part of a quaternary complex containing aPKC, PARD3, a PARD6 protein (PARD6A, PARD6B or PARD6G) and a GTPase protein (CDC42 or RAC1). Part of a complex with LLGL1 and PARD6B. Interacts with ADAP1/CENTA1. Interaction with SMG1, through the ZN-finger domain, activates the kinase activity. Interacts with CDK7. Forms a complex with RAB2A and GAPDH involved in recruitment onto the membrane of vesicular tubular clusters (VTCs). Interacts with ECT2 ('Thr-359' phosphorylated form). Interacts with VAMP2. Interacts with WDFY2 (via WD repeats 1-3). In terms of processing, phosphorylation at Thr-412 in the activation loop is not mandatory for activation. Upon neuronal growth factor (NGF) stimulation, phosphorylated by SRC at Tyr-265, Tyr-280 and Tyr-334. Phosphorylation at Tyr-265 facilitates binding to KPNB1/importin-beta regulating entry of PRKCI into the nucleus. Phosphorylation on Tyr-334 is important for NF-kappa-B stimulation. Phosphorylated at Thr-564 during the initial phase of long term potentiation. In terms of tissue distribution, expressed in dorsal hippocampus (at protein level).

Its subcellular location is the cytoplasm. The protein resides in the membrane. It is found in the endosome. It localises to the nucleus. It carries out the reaction L-seryl-[protein] + ATP = O-phospho-L-seryl-[protein] + ADP + H(+). The catalysed reaction is L-threonyl-[protein] + ATP = O-phospho-L-threonyl-[protein] + ADP + H(+). Atypical PKCs (PRKCI and PRKCZ) exhibit an elevated basal enzymatic activity (that may be due to the interaction with SMG1 or SQSTM1) and are not regulated by diacylglycerol, phosphatidylserine, phorbol esters or calcium ions. Two specific sites, Thr-412 (activation loop of the kinase domain) and Thr-564 (turn motif), need to be phosphorylated for its full activation. Might also be a target for novel lipid activators that are elevated during nutrient-stimulated insulin secretion. Its function is as follows. Calcium- and diacylglycerol-independent serine/ threonine-protein kinase that plays a general protective role against apoptotic stimuli, is involved in NF-kappa-B activation, cell survival, differentiation and polarity, and contributes to the regulation of microtubule dynamics in the early secretory pathway. Is necessary for BCR-ABL oncogene-mediated resistance to apoptotic drug in leukemia cells, protecting leukemia cells against drug-induced apoptosis. In cultured neurons, prevents amyloid beta protein-induced apoptosis by interrupting cell death process at a very early step. In glioblastoma cells, may function downstream of phosphatidylinositol 3-kinase (PI3K) and PDPK1 in the promotion of cell survival by phosphorylating and inhibiting the pro-apoptotic factor BAD. Can form a protein complex in non-small cell lung cancer (NSCLC) cells with PARD6A and ECT2 and regulate ECT2 oncogenic activity by phosphorylation, which in turn promotes transformed growth and invasion. In response to nerve growth factor (NGF), acts downstream of SRC to phosphorylate and activate IRAK1, allowing the subsequent activation of NF-kappa-B and neuronal cell survival. Functions in the organization of the apical domain in epithelial cells by phosphorylating EZR. This step is crucial for activation and normal distribution of EZR at the early stages of intestinal epithelial cell differentiation. Forms a protein complex with LLGL1 and PARD6B independently of PARD3 to regulate epithelial cell polarity. Plays a role in microtubule dynamics in the early secretory pathway through interaction with RAB2A and GAPDH and recruitment to vesicular tubular clusters (VTCs). In human coronary artery endothelial cells (HCAEC), is activated by saturated fatty acids and mediates lipid-induced apoptosis. Downstream of PI3K is required for insulin-stimulated glucose transport. Activates RAB4A and promotes its association with KIF3A which is required for the insulin-induced SLC2A4/GLUT4 translocation in adipocytes. Is essential in early embryogenesis and development of differentiating photoreceptors by playing a role in the establishment of epithelial and neuronal polarity. Involved in early synaptic long term potentiation phase in CA1 hippocampal cells and short term memory formation. The protein is Protein kinase C iota type (Prkci) of Rattus norvegicus (Rat).